The primary structure comprises 317 residues: Beta-ketoacyl-[acyl-carrier-protein] synthase III (317 aa).

Active-site residues include cysteine 112 and histidine 244. Residues 245–249 (QANIR) are ACP-binding. Asparagine 274 is a catalytic residue.

The protein belongs to the thiolase-like superfamily. FabH family. In terms of assembly, homodimer.

The protein resides in the cytoplasm. It carries out the reaction malonyl-[ACP] + acetyl-CoA + H(+) = 3-oxobutanoyl-[ACP] + CO2 + CoA. The protein operates within lipid metabolism; fatty acid biosynthesis. In terms of biological role, catalyzes the condensation reaction of fatty acid synthesis by the addition to an acyl acceptor of two carbons from malonyl-ACP. Catalyzes the first condensation reaction which initiates fatty acid synthesis and may therefore play a role in governing the total rate of fatty acid production. Possesses both acetoacetyl-ACP synthase and acetyl transacylase activities. Its substrate specificity determines the biosynthesis of branched-chain and/or straight-chain of fatty acids. The polypeptide is Beta-ketoacyl-[acyl-carrier-protein] synthase III (Rickettsia akari (strain Hartford)).